A 274-amino-acid chain; its full sequence is Large ribosomal subunit protein uL2 (274 aa).

The disordered stretch occupies residues 222–257; sequence GVAMNPVDHPHGGGEGRTSGGRHPVSPWGVPTKGYK.

It belongs to the universal ribosomal protein uL2 family. In terms of assembly, part of the 50S ribosomal subunit. Forms a bridge to the 30S subunit in the 70S ribosome.

In terms of biological role, one of the primary rRNA binding proteins. Required for association of the 30S and 50S subunits to form the 70S ribosome, for tRNA binding and peptide bond formation. It has been suggested to have peptidyltransferase activity; this is somewhat controversial. Makes several contacts with the 16S rRNA in the 70S ribosome. In Nitrosococcus oceani (strain ATCC 19707 / BCRC 17464 / JCM 30415 / NCIMB 11848 / C-107), this protein is Large ribosomal subunit protein uL2.